A 154-amino-acid polypeptide reads, in one-letter code: UPF0178 protein Glov_0658 (154 aa).

Belongs to the UPF0178 family.

The polypeptide is UPF0178 protein Glov_0658 (Trichlorobacter lovleyi (strain ATCC BAA-1151 / DSM 17278 / SZ) (Geobacter lovleyi)).